Reading from the N-terminus, the 118-residue chain is Small ribosomal subunit protein uS13 (118 aa).

Positions 92–118 (KKHLPVRGQRTKTNARTRKGPRKPIKK) are disordered.

Belongs to the universal ribosomal protein uS13 family. Part of the 30S ribosomal subunit. Forms a loose heterodimer with protein S19. Forms two bridges to the 50S subunit in the 70S ribosome.

Functionally, located at the top of the head of the 30S subunit, it contacts several helices of the 16S rRNA. In the 70S ribosome it contacts the 23S rRNA (bridge B1a) and protein L5 of the 50S subunit (bridge B1b), connecting the 2 subunits; these bridges are implicated in subunit movement. Contacts the tRNAs in the A and P-sites. The protein is Small ribosomal subunit protein uS13 of Wigglesworthia glossinidia brevipalpis.